A 288-amino-acid chain; its full sequence is 33 kDa chaperonin (288 aa).

2 disulfides stabilise this stretch: Cys-236–Cys-238 and Cys-269–Cys-272.

The protein belongs to the HSP33 family. In terms of processing, under oxidizing conditions two disulfide bonds are formed involving the reactive cysteines. Under reducing conditions zinc is bound to the reactive cysteines and the protein is inactive.

It is found in the cytoplasm. In terms of biological role, redox regulated molecular chaperone. Protects both thermally unfolding and oxidatively damaged proteins from irreversible aggregation. Plays an important role in the bacterial defense system toward oxidative stress. In Lactococcus lactis subsp. lactis (strain IL1403) (Streptococcus lactis), this protein is 33 kDa chaperonin.